We begin with the raw amino-acid sequence, 130 residues long: Small ribosomal subunit protein uS8 (130 aa).

The protein belongs to the universal ribosomal protein uS8 family. As to quaternary structure, part of the 30S ribosomal subunit.

One of the primary rRNA binding proteins, it binds directly to 16S rRNA central domain where it helps coordinate assembly of the platform of the 30S subunit. In Methanocaldococcus jannaschii (strain ATCC 43067 / DSM 2661 / JAL-1 / JCM 10045 / NBRC 100440) (Methanococcus jannaschii), this protein is Small ribosomal subunit protein uS8 (rps8).